Reading from the N-terminus, the 354-residue chain is Chorismate synthase (354 aa).

Arg-46 is a binding site for NADP(+). FMN contacts are provided by residues 123–125 (RSS), 239–240 (NA), Gly-284, 299–303 (KPVAT), and Arg-325.

It belongs to the chorismate synthase family. Homotetramer. The cofactor is FMNH2.

The enzyme catalyses 5-O-(1-carboxyvinyl)-3-phosphoshikimate = chorismate + phosphate. It participates in metabolic intermediate biosynthesis; chorismate biosynthesis; chorismate from D-erythrose 4-phosphate and phosphoenolpyruvate: step 7/7. Functionally, catalyzes the anti-1,4-elimination of the C-3 phosphate and the C-6 proR hydrogen from 5-enolpyruvylshikimate-3-phosphate (EPSP) to yield chorismate, which is the branch point compound that serves as the starting substrate for the three terminal pathways of aromatic amino acid biosynthesis. This reaction introduces a second double bond into the aromatic ring system. The protein is Chorismate synthase of Azobacteroides pseudotrichonymphae genomovar. CFP2.